Consider the following 613-residue polypeptide: Zinc metalloproteinase-disintegrin-like MTP8 (613 aa).

The first 20 residues, 1-20 (MIEVLLVTICFTVFPYQGSP), serve as a signal peptide directing secretion. Residues 21–191 (IILESGNVND…DETIEKISQL (171 aa)) constitute a propeptide that is removed on maturation. Positions 205-401 (KYIELYVVVD…VRPQCILNKP (197 aa)) constitute a Peptidase M12B domain. Glu208 contributes to the Ca(2+) binding site. N-linked (GlcNAc...) asparagine glycosylation occurs at Asn282. Asp292 is a Ca(2+) binding site. 3 disulfides stabilise this stretch: Cys316/Cys396, Cys356/Cys380, and Cys358/Cys363. 3 residues coordinate Zn(2+): His341, His345, and His351. Cys396, Asn399, Asn414, Phe416, Glu418, Glu421, and Asp424 together coordinate Ca(2+). Residues 409–495 (PPVCGNYFVE…KCPTDSFQRN (87 aa)) enclose the Disintegrin domain. Intrachain disulfides connect Cys412–Cys441, Cys423–Cys436, Cys425–Cys431, Cys435–Cys458, Cys449–Cys455, Cys454–Cys480, Cys467–Cys487, Cys474–Cys506, Cys499–Cys511, Cys518–Cys568, Cys533–Cys575, Cys543–Cys577, Cys546–Cys556, Cys563–Cys601, and Cys595–Cys606. Asn437 carries an N-linked (GlcNAc...) asparagine glycan. Residues 473 to 475 (DCD) carry the D/ECD-tripeptide motif. Ca(2+) contacts are provided by Asp475, Leu476, Glu478, and Asp490. N-linked (GlcNAc...) asparagine glycans are attached at residues Asn550 and Asn572.

The protein belongs to the venom metalloproteinase (M12B) family. P-III subfamily. Monomer. The cofactor is Zn(2+). As to expression, expressed by the venom gland.

It localises to the secreted. Functionally, snake venom zinc metalloproteinase that may impair hemostasis in the prey. This Drysdalia coronoides (White-lipped snake) protein is Zinc metalloproteinase-disintegrin-like MTP8.